The primary structure comprises 163 residues: Nucleotide-binding protein Cla_1551 (163 aa).

It belongs to the YajQ family.

Functionally, nucleotide-binding protein. In Campylobacter lari (strain RM2100 / D67 / ATCC BAA-1060), this protein is Nucleotide-binding protein Cla_1551.